A 160-amino-acid polypeptide reads, in one-letter code: Cytochrome b6-f complex subunit 4 (160 aa).

Transmembrane regions (helical) follow at residues 36–56 (IFYM…GLAV), 96–116 (LGVL…FIKI), and 131–151 (TVFL…ALPI).

The protein belongs to the cytochrome b family. PetD subfamily. The 4 large subunits of the cytochrome b6-f complex are cytochrome b6, subunit IV (17 kDa polypeptide, petD), cytochrome f and the Rieske protein, while the 4 small subunits are petG, petL, petM and petN. The complex functions as a dimer.

The protein localises to the plastid. It is found in the chloroplast thylakoid membrane. Functionally, component of the cytochrome b6-f complex, which mediates electron transfer between photosystem II (PSII) and photosystem I (PSI), cyclic electron flow around PSI, and state transitions. The protein is Cytochrome b6-f complex subunit 4 of Auxenochlorella protothecoides (Green microalga).